The following is a 774-amino-acid chain: Beta-xylosidase/alpha-L-arabinofuranosidase 1 (774 aa).

A signal peptide spans 1–33 (ANTKNREPKVSSVFLCFSIFYVTVLLNCNHVYG). 2 N-linked (GlcNAc...) asparagine glycosylation sites follow: N48 and N136. D303 is an active-site residue. Residues N437 and N530 are each glycosylated (N-linked (GlcNAc...) asparagine).

The protein belongs to the glycoside hydrolase 3 family. Proteolytically cleaved in roots to form a 65 kDa protein.

Its subcellular location is the secreted. It localises to the extracellular space. The protein localises to the extracellular matrix. It catalyses the reaction Hydrolysis of (1-&gt;4)-beta-D-xylans, to remove successive D-xylose residues from the non-reducing termini.. It carries out the reaction Hydrolysis of terminal non-reducing alpha-L-arabinofuranoside residues in alpha-L-arabinosides.. Functionally, a bifunctional beta-xylosidase/alpha-L-arabinosidase, exo-enzyme that acts synergistically with endohydrolases. Releases xylose and arabinose from cell walls. Does not cleave xylan from oat spelts although xylan from oat spelts was degraded to xylose when this enzyme was used in combination with xylanase. Also releases xylose and arabinose from aryl glycosides, xylo-oligosaccharides, arabinan from sugar beet and arabino-oligosaccharides, arabinan from sugar beet and arabinoxylan from wheat. The sequence is that of Beta-xylosidase/alpha-L-arabinofuranosidase 1 from Medicago sativa subsp. varia (Alfalfa).